A 48-amino-acid chain; its full sequence is SRGFGFVTFGDEKGFGFVTFGDEKDAIEGMNGQDLDGRNITVNEAQSR.

This chain is Glycine-rich RNA-binding protein 3, found in Populus euphratica (Euphrates poplar).